A 275-amino-acid polypeptide reads, in one-letter code: L-aspartate dehydrogenase (275 aa).

The NAD(+) site is built by alanine 130 and asparagine 196. The active site involves histidine 226.

This sequence belongs to the L-aspartate dehydrogenase family.

It carries out the reaction L-aspartate + NADP(+) + H2O = oxaloacetate + NH4(+) + NADPH + H(+). The catalysed reaction is L-aspartate + NAD(+) + H2O = oxaloacetate + NH4(+) + NADH + H(+). It participates in cofactor biosynthesis; NAD(+) biosynthesis; iminoaspartate from L-aspartate (dehydrogenase route): step 1/1. Functionally, specifically catalyzes the NAD or NADP-dependent dehydrogenation of L-aspartate to iminoaspartate. The protein is L-aspartate dehydrogenase of Ruegeria pomeroyi (strain ATCC 700808 / DSM 15171 / DSS-3) (Silicibacter pomeroyi).